The following is a 61-amino-acid chain: Large ribosomal subunit protein eL37 (61 aa).

Cysteine 19, cysteine 22, cysteine 34, and cysteine 37 together coordinate Zn(2+). The C4-type zinc-finger motif lies at cysteine 19–cysteine 37.

The protein belongs to the eukaryotic ribosomal protein eL37 family. Requires Zn(2+) as cofactor.

Functionally, binds to the 23S rRNA. The polypeptide is Large ribosomal subunit protein eL37 (Saccharolobus islandicus (strain Y.N.15.51 / Yellowstone #2) (Sulfolobus islandicus)).